The chain runs to 212 residues: Cytochrome c biogenesis ATP-binding export protein CcmA (212 aa).

Residues 7-209 (LSLQNLSCQR…HLQKLNLAAY (203 aa)) enclose the ABC transporter domain. Residue 39 to 46 (GHNGIGKT) coordinates ATP.

Belongs to the ABC transporter superfamily. CcmA exporter (TC 3.A.1.107) family. The complex is composed of two ATP-binding proteins (CcmA) and two transmembrane proteins (CcmB).

The protein localises to the cell inner membrane. It carries out the reaction heme b(in) + ATP + H2O = heme b(out) + ADP + phosphate + H(+). Part of the ABC transporter complex CcmAB involved in the biogenesis of c-type cytochromes; once thought to export heme, this seems not to be the case, but its exact role is uncertain. Responsible for energy coupling to the transport system. In Haemophilus influenzae (strain ATCC 51907 / DSM 11121 / KW20 / Rd), this protein is Cytochrome c biogenesis ATP-binding export protein CcmA.